Here is a 157-residue protein sequence, read N- to C-terminus: SsrA-binding protein (157 aa).

Basic and acidic residues predominate over residues K136–R151. Residues K136–G157 are disordered.

The protein belongs to the SmpB family.

It localises to the cytoplasm. Required for rescue of stalled ribosomes mediated by trans-translation. Binds to transfer-messenger RNA (tmRNA), required for stable association of tmRNA with ribosomes. tmRNA and SmpB together mimic tRNA shape, replacing the anticodon stem-loop with SmpB. tmRNA is encoded by the ssrA gene; the 2 termini fold to resemble tRNA(Ala) and it encodes a 'tag peptide', a short internal open reading frame. During trans-translation Ala-aminoacylated tmRNA acts like a tRNA, entering the A-site of stalled ribosomes, displacing the stalled mRNA. The ribosome then switches to translate the ORF on the tmRNA; the nascent peptide is terminated with the 'tag peptide' encoded by the tmRNA and targeted for degradation. The ribosome is freed to recommence translation, which seems to be the essential function of trans-translation. This Rhodopseudomonas palustris (strain HaA2) protein is SsrA-binding protein.